The following is a 98-amino-acid chain: Integration host factor subunit beta (98 aa).

The protein belongs to the bacterial histone-like protein family. In terms of assembly, heterodimer of an alpha and a beta chain.

In terms of biological role, this protein is one of the two subunits of integration host factor, a specific DNA-binding protein that functions in genetic recombination as well as in transcriptional and translational control. The sequence is that of Integration host factor subunit beta from Pseudomonas putida (strain GB-1).